Reading from the N-terminus, the 503-residue chain is WD repeat-containing protein 55 homolog (503 aa).

The interval 1–131 (MHTHNNFKTP…DSAAFDLDDL (131 aa)) is disordered. Acidic residues-rich tracts occupy residues 12–23 (DADELDDLDDDM) and 37–56 (VGED…DMEA). Residues 59 to 76 (PNQNADENESISSDSSFD) show a composition bias toward polar residues. Acidic residues predominate over residues 78–96 (NAEDSSDSDDSMLEEDEAE). WD repeat units follow at residues 157-196 (KLED…NKLL), 201-242 (VHSK…KLYE), 244-282 (AHDD…PIFE), 285-324 (EVED…LYVQ), 327-366 (PYEE…YHCD), and 411-450 (QHNM…DFGD). The segment at 483–503 (TKEDEDNADNNDAAAGPSNSA) is disordered.

It belongs to the WD repeat WDR55 family.

The protein is WD repeat-containing protein 55 homolog of Drosophila pseudoobscura pseudoobscura (Fruit fly).